We begin with the raw amino-acid sequence, 3072 residues long: Eukaryotic translation initiation factor 2-alpha kinase PK4 (3072 aa).

Topologically, residues 1–106 (MCNFIKKGIR…EFRWLINKLE (106 aa)) are cytoplasmic. Residues 107-127 (IIYFYFFCHLLLLCIFQNIFL) form a helical membrane-spanning segment. Over 128-1643 (LTYMSKEYFL…FTSIRYKRRR (1516 aa)) the chain is Lumenal. Residues 383-402 (KEKCHRDEKCDRGENYDRGE) are disordered. Residues 576–610 (KKKILDENDMITIDNNIDKKENILFPYFHMEILKD) are 10 X 7 AA tandem repeat of D-K-N-[GE]-L-D-[GD]. The disordered stretch occupies residues 970-1010 (QYEDNNDNDNNKNDNNKNDNNKNDNNKNDNNNNNNNNNNNS). A compositionally biased stretch (basic and acidic residues) spans 978–996 (DNNKNDNNKNDNNKNDNNK). Positions 997–1009 (NDNNNNNNNNNNN) are enriched in low complexity. The helical transmembrane segment at 1644–1664 (WYWRVFYTIMFIIFFPVLFIY) threads the bilayer. The Cytoplasmic segment spans residues 1665–3072 (RRIIKRRKGS…IKNENNGADK (1408 aa)). 2 disordered regions span residues 1737–1766 (KNYNNNNNNNNNKNNNNISNNNSNSNSKSN) and 1917–1937 (KVGSSNKYHKKNYTDNEKDKK). The segment covering 1738 to 1766 (NYNNNNNNNNNKNNNNISNNNSNSNSKSN) has biased composition (low complexity). The span at 1928–1937 (NYTDNEKDKK) shows a compositional bias: basic and acidic residues. ATP is bound by residues 2152 to 2160 (IGQGGFGSV) and lysine 2177. Disordered stretches follow at residues 2316 to 2402 (FYSD…EGRD), 2479 to 2558 (RNED…KKLD), and 2691 to 2749 (ENDD…DDDI). Residues 2326–2335 (KNKENPEKNH) show a composition bias toward basic and acidic residues. Basic residues predominate over residues 2362–2384 (HKLKKRKNKKKKSKKKRKSKSKI). 10 consecutive repeat copies span residues 2483 to 2489 (DKNGLDG), 2490 to 2496 (DKNGLDG), 2497 to 2503 (DKNGLDG), 2504 to 2510 (DKNGLDG), 2511 to 2517 (DKNGLDG), 2518 to 2524 (DKNELDG), 2525 to 2531 (DKNGLDG), 2532 to 2538 (DKNGLDG), 2539 to 2545 (DKNGLDG), and 2546 to 2552 (DKNELDD). One can recognise a Protein kinase domain in the interval 2627 to 2998 (TNVESINTNG…KIKVLLDPHL (372 aa)). Residues 2692–2702 (NDDDDDDDDDN) are compositionally biased toward acidic residues. Aspartate 2835 functions as the Proton acceptor in the catalytic mechanism. The residue at position 2902 (threonine 2902) is a Phosphothreonine.

It belongs to the protein kinase superfamily. Ser/Thr protein kinase family. GCN2 subfamily. In terms of assembly, may form oligomers in response to stress; oligomerization may result in catalytic activity. Interacts with BIP; the interaction is disrupted in response to stress. In terms of processing, auto-phosphorylated.

The protein localises to the endoplasmic reticulum membrane. It catalyses the reaction L-seryl-[protein] + ATP = O-phospho-L-seryl-[protein] + ADP + H(+). It carries out the reaction L-threonyl-[protein] + ATP = O-phospho-L-threonyl-[protein] + ADP + H(+). Its activity is regulated as follows. Dissociation from BIP and oligomerization, may results autophosphorylation and kinase activity induction. During the asexual blood stage, phosphorylates translation factor eIF2alpha in late schizonts resulting in protein translation inhibition. Plays a role in trophozoite differentiation into schizonts. The polypeptide is Eukaryotic translation initiation factor 2-alpha kinase PK4 (Plasmodium falciparum (isolate 3D7)).